The sequence spans 217 residues: Large ribosomal subunit protein uL1 (217 aa).

Belongs to the universal ribosomal protein uL1 family.

The polypeptide is Large ribosomal subunit protein uL1 (RPL10A) (Candida glabrata (strain ATCC 2001 / BCRC 20586 / JCM 3761 / NBRC 0622 / NRRL Y-65 / CBS 138) (Yeast)).